The chain runs to 429 residues: Glutamyl-tRNA reductase (429 aa).

Substrate is bound by residues 49 to 52 (TCNR), Ser-107, 112 to 114 (EPQ), and Gln-118. Catalysis depends on Cys-50, which acts as the Nucleophile. 187-192 (GAGETI) serves as a coordination point for NADP(+).

It belongs to the glutamyl-tRNA reductase family. Homodimer.

The enzyme catalyses (S)-4-amino-5-oxopentanoate + tRNA(Glu) + NADP(+) = L-glutamyl-tRNA(Glu) + NADPH + H(+). It participates in porphyrin-containing compound metabolism; protoporphyrin-IX biosynthesis; 5-aminolevulinate from L-glutamyl-tRNA(Glu): step 1/2. Catalyzes the NADPH-dependent reduction of glutamyl-tRNA(Glu) to glutamate 1-semialdehyde (GSA). This chain is Glutamyl-tRNA reductase, found in Pseudomonas fluorescens (strain SBW25).